The following is a 37-amino-acid chain: Large ribosomal subunit protein bL36 (37 aa).

It belongs to the bacterial ribosomal protein bL36 family.

The chain is Large ribosomal subunit protein bL36 from Rhodococcus erythropolis (strain PR4 / NBRC 100887).